Reading from the N-terminus, the 905-residue chain is Transcription termination factor 1 (905 aa).

Composition is skewed to basic and acidic residues over residues 1–16 (MEGE…PVSD) and 24–33 (IHKERPQKHS). Positions 1–33 (MEGESSRFEIHTPVSDKKKKKCSIHKERPQKHS) are disordered. Positions 1 to 223 (MEGESSRFEI…AHKNKSKKKK (223 aa)) are N-terminal region (NRD). Position 65 is a phosphoserine (serine 65). Residues 151–443 (SHAHKSEALH…KSRPRQKKTQ (293 aa)) form a disordered region. Composition is skewed to basic residues over residues 163 to 174 (VREKKNKKHQRK) and 215 to 226 (HKNKSKKKKKKS). Serine 240 is subject to Phosphoserine. Threonine 248 carries the phosphothreonine modification. Basic residues-rich tracts occupy residues 270 to 283 (THKK…KKKS), 330 to 339 (NKSKKKKKKS), and 385 to 401 (TKKK…KRAR). Serine 403 bears the Phosphoserine mark. Residues 410–419 (PSKNSESTLF) show a composition bias toward polar residues. Tyrosine 476 is subject to Phosphotyrosine. Residues serine 478, serine 481, and serine 487 each carry the phosphoserine modification. A may be involved in interaction with ARF region spans residues 498–886 (LQEFIPNIKD…IEKESEGQAP (389 aa)). 2 Myb-like domains span residues 612–661 (DVNN…SQIS) and 661–745 (SSQR…TEIL). Lysine 700 is covalently cross-linked (Glycyl lysine isopeptide (Lys-Gly) (interchain with G-Cter in SUMO2)). Serine 872 carries the phosphoserine modification.

Oligomer. The oligomeric structure enables to interact simultaneously with two separate DNA fragments. Interacts with BAZ2A/TIP5. Interacts with CAVIN1. Interacts (via the N-terminal region (NRD) and a C-terminal region) with CDKN2A/ARF; the interaction is direct. Interacts (via C-terminal region) with NPM1/B23.

The protein resides in the nucleus. It is found in the nucleolus. The protein localises to the nucleoplasm. In terms of biological role, multifunctional nucleolar protein that terminates ribosomal gene transcription, mediates replication fork arrest and regulates RNA polymerase I transcription on chromatin. Plays a dual role in rDNA regulation, being involved in both activation and silencing of rDNA transcription. Interaction with BAZ2A/TIP5 recovers DNA-binding activity. The protein is Transcription termination factor 1 (TTF1) of Homo sapiens (Human).